A 216-amino-acid polypeptide reads, in one-letter code: Histidine biosynthesis bifunctional protein HisIE (216 aa).

The tract at residues Met-1–Thr-127 is phosphoribosyl-AMP cyclohydrolase. Residues Leu-128–Arg-216 are phosphoribosyl-ATP pyrophosphohydrolase.

In the N-terminal section; belongs to the PRA-CH family. It in the C-terminal section; belongs to the PRA-PH family.

It is found in the cytoplasm. The catalysed reaction is 1-(5-phospho-beta-D-ribosyl)-ATP + H2O = 1-(5-phospho-beta-D-ribosyl)-5'-AMP + diphosphate + H(+). It catalyses the reaction 1-(5-phospho-beta-D-ribosyl)-5'-AMP + H2O = 1-(5-phospho-beta-D-ribosyl)-5-[(5-phospho-beta-D-ribosylamino)methylideneamino]imidazole-4-carboxamide. It functions in the pathway amino-acid biosynthesis; L-histidine biosynthesis; L-histidine from 5-phospho-alpha-D-ribose 1-diphosphate: step 2/9. Its pathway is amino-acid biosynthesis; L-histidine biosynthesis; L-histidine from 5-phospho-alpha-D-ribose 1-diphosphate: step 3/9. This chain is Histidine biosynthesis bifunctional protein HisIE (hisI), found in Nostoc sp. (strain PCC 7120 / SAG 25.82 / UTEX 2576).